Reading from the N-terminus, the 110-residue chain is Protein YcgL (110 aa).

One can recognise a YcgL domain in the interval 14-98 (MFCVIYRSSK…PPEDLLKQHL (85 aa)). A disordered region spans residues 88 to 110 (PPPEDLLKQHLSSVGQNTSHADR). Residues 97–110 (HLSSVGQNTSHADR) are compositionally biased toward polar residues.

The polypeptide is Protein YcgL (Salmonella typhi).